Here is a 132-residue protein sequence, read N- to C-terminus: Transmembrane protein 170B (132 aa).

Residues 1 to 37 (MRAEGADHSMINLSVQQVLSLWAHGTVLRNLTEMWYW) are Extracellular-facing. N-linked (GlcNAc...) asparagine glycosylation is present at asparagine 12. The helical transmembrane segment at 38–58 (IFLWALFSSLFVHGAAGVLMF) threads the bilayer. Residues 59-68 (VMLQRHRQGR) lie on the Cytoplasmic side of the membrane. A helical transmembrane segment spans residues 69-89 (VLSIIAVSIGFLASVTGAMIT). At 90–104 (SAAVAGIYRVAGKNM) the chain is on the extracellular side. Residues 105–125 (APLEALVWGVGQTVLTLIISF) traverse the membrane as a helical segment. At 126 to 132 (SRILATL) the chain is on the cytoplasmic side.

It belongs to the TMEM170 family. As to quaternary structure, interacts with CTNNB1.

Its subcellular location is the cell membrane. The protein is Transmembrane protein 170B (Tmem170b) of Rattus norvegicus (Rat).